Reading from the N-terminus, the 601-residue chain is Pyranose 2-oxidase (601 aa).

H151 is subject to Tele-8alpha-FAD histidine. Residues Q406 and H408 each coordinate substrate. Catalysis depends on H505, which acts as the Proton acceptor. N558 is a catalytic residue. The disordered stretch occupies residues 577-601; sequence KLGKKGSHSGNRDDGDVDTDTDDDA. Positions 591–601 are enriched in acidic residues; it reads GDVDTDTDDDA.

It belongs to the GMC oxidoreductase family. Homotetramer. It depends on FAD as a cofactor.

It carries out the reaction D-glucose + O2 = 2-dehydro-D-glucose + H2O2. In terms of biological role, catalyzes the oxidation of various aldopyranoses and disaccharides on carbon-2 to the corresponding 2-keto sugars concomitant with the reduction of O(2) to H(2)O(2). In Emericella nidulans (strain FGSC A4 / ATCC 38163 / CBS 112.46 / NRRL 194 / M139) (Aspergillus nidulans), this protein is Pyranose 2-oxidase (p2ox).